A 339-amino-acid chain; its full sequence is Methyltransferase ptaI (339 aa).

Belongs to the methyltransferase superfamily.

The protein operates within secondary metabolite biosynthesis. Functionally, methyltransferase; part of the gene cluster that mediates the biosynthesis of pestheic acid, a diphenyl ether which is a biosynthetic precursor of the unique chloropupukeananes. The biosynthesis initiates from condensation of acetate and malonate units catalyzed by the non-reducing PKS ptaA. As the ptaA protein is TE/CLC domain-deficient, hydrolysis and Claisen cyclization of the polyketide could be catalyzed by ptaB containing a beta-lactamase domain. The ptaB protein might hydrolyze the thioester bond between the ACP of ptaA and the intermediate to release atrochrysone carboxylic acid, which is spontaneously dehydrated to form endocrocin anthrone. Endocrocin anthrone is then converted to endocrocin, catalyzed by the anthrone oxygenase ptaC. Spontaneous decarboxylation of endocrocin occurs to generate emodin. An O-methyltransferase (ptaH or ptaI) could methylate emodin to form physcion. PtaJ could then catalyze the oxidative cleavage of physcion, and rotation of the intermediate could then afford desmethylisosulochrin. PtaF, a putative NADH-dependent oxidoreductase, might also participate in the oxidative cleavage step. Desmethylisosulochrin is then transformed by another O-methyltransferase (ptaH or ptaI) to form isosulochrin. Chlorination of isosulochrin by ptaM in the cyclohexadienone B ring then produces chloroisosulochrin. PtaE is responsible for the oxidative coupling reactions of both benzophenones isosulouchrin and chloroisosulochrin to RES-1214-1 and pestheic acid respectively, regardless of chlorination. This is Methyltransferase ptaI from Pestalotiopsis fici (strain W106-1 / CGMCC3.15140).